Here is a 201-residue protein sequence, read N- to C-terminus: UPF0098 protein MT1961 (201 aa).

Positions threonine 125–tyrosine 146 are disordered.

It belongs to the UPF0098 family.

This chain is UPF0098 protein MT1961, found in Mycobacterium tuberculosis (strain CDC 1551 / Oshkosh).